Here is a 460-residue protein sequence, read N- to C-terminus: Keratin, type I cytoskeletal 27 (460 aa).

Residues 1 to 83 (MSVRFSSASR…GNEHGLLSGN (83 aa)) form a head region. The interval 84 to 119 (EKVTMQNLNDRLASYLDNVRALEEANADLEQKIKGW) is coil 1A. Residues 84-399 (EKVTMQNLND…RLIDGEDGSC (316 aa)) enclose the IF rod domain. The tract at residues 120–141 (YEKFGPGSCRGLDHDYSRYFTV) is linker 1. Positions 142–233 (IDDLRNQIIS…KNHEEEMKAL (92 aa)) are coil 1B. The linker 12 stretch occupies residues 234–256 (QCAAGGNVNVEMNAAPGVDLTVL). The interval 257–395 (LNNMRAEYEA…ETYCRLIDGE (139 aa)) is coil 2. The segment at 396-460 (DGSCTKSKGY…NMKSEQRVPS (65 aa)) is tail. The disordered stretch occupies residues 429-460 (DPRGKVPSSRVHTVEEKSTKVNNMKSEQRVPS). Residues 448 to 460 (KVNNMKSEQRVPS) show a composition bias toward polar residues.

It belongs to the intermediate filament family. As to quaternary structure, heterotetramer of two type I and two type II keratins. Interacts with KRT6A to form filaments.

It is found in the cytoplasm. In terms of biological role, essential for the proper assembly of type I and type II keratin protein complexes and formation of keratin intermediate filaments in the inner root sheath (irs). The sequence is that of Keratin, type I cytoskeletal 27 from Capra hircus (Goat).